Here is a 405-residue protein sequence, read N- to C-terminus: Tyrosine--tRNA ligase (405 aa).

A 'HIGH' region motif is present at residues 41 to 50; that stretch reads PTAPDLHLGH. The 'KMSKS' region signature appears at 225-229; that stretch reads KMSKS. Position 228 (lysine 228) interacts with ATP. Residues 342–404 form the S4 RNA-binding domain; the sequence is EPLLVWVLSK…GKKGKFLKII (63 aa).

The protein belongs to the class-I aminoacyl-tRNA synthetase family. TyrS type 2 subfamily. As to quaternary structure, homodimer.

It localises to the cytoplasm. The catalysed reaction is tRNA(Tyr) + L-tyrosine + ATP = L-tyrosyl-tRNA(Tyr) + AMP + diphosphate + H(+). In terms of biological role, catalyzes the attachment of tyrosine to tRNA(Tyr) in a two-step reaction: tyrosine is first activated by ATP to form Tyr-AMP and then transferred to the acceptor end of tRNA(Tyr). In Leptospira interrogans serogroup Icterohaemorrhagiae serovar Lai (strain 56601), this protein is Tyrosine--tRNA ligase.